A 125-amino-acid chain; its full sequence is Small ribosomal subunit protein uS12 (125 aa).

Asp89 is subject to 3-methylthioaspartic acid.

It belongs to the universal ribosomal protein uS12 family. As to quaternary structure, part of the 30S ribosomal subunit. Contacts proteins S8 and S17. May interact with IF1 in the 30S initiation complex.

Its function is as follows. With S4 and S5 plays an important role in translational accuracy. In terms of biological role, interacts with and stabilizes bases of the 16S rRNA that are involved in tRNA selection in the A site and with the mRNA backbone. Located at the interface of the 30S and 50S subunits, it traverses the body of the 30S subunit contacting proteins on the other side and probably holding the rRNA structure together. The combined cluster of proteins S8, S12 and S17 appears to hold together the shoulder and platform of the 30S subunit. This is Small ribosomal subunit protein uS12 from Clostridium botulinum (strain Alaska E43 / Type E3).